The following is a 251-amino-acid chain: Tungstate/molybdate/chromate-binding protein ModA (251 aa).

The signal sequence occupies residues Met1–Ala23. Residues Thr60 and Ile168 each coordinate molybdate.

This sequence belongs to the bacterial solute-binding protein ModA family. The complex is composed of two ATP-binding proteins (ModC), two transmembrane proteins (ModB) and a solute-binding protein (ModA).

It localises to the periplasm. Functionally, part of the ABC transporter complex ModABC involved in the transport of molybdenum into the cell. Binds tungstate and molybdate. Can also bind chromate, with lower affinity. Plays an essential role in recruitment of molybdate for nitrate reduction. The chain is Tungstate/molybdate/chromate-binding protein ModA from Pseudomonas aeruginosa (strain ATCC 15692 / DSM 22644 / CIP 104116 / JCM 14847 / LMG 12228 / 1C / PRS 101 / PAO1).